The sequence spans 78 residues: Sec-independent protein translocase protein TatA (78 aa).

Residues 1-21 form a helical membrane-spanning segment; it reads MGSLSIWHWLIVLLIVALVFG. Basic and acidic residues-rich tracts occupy residues 39–57 and 65–78; these read FKEG…RDQL and VDAK…GDSR. Residues 39 to 78 form a disordered region; that stretch reads FKEGMKDGETPEGQQRDQLSRTNTVDVDAKEKAPHSGDSR.

It belongs to the TatA/E family. As to quaternary structure, the Tat system comprises two distinct complexes: a TatABC complex, containing multiple copies of TatA, TatB and TatC subunits, and a separate TatA complex, containing only TatA subunits. Substrates initially bind to the TatABC complex, which probably triggers association of the separate TatA complex to form the active translocon.

Its subcellular location is the cell inner membrane. Its function is as follows. Part of the twin-arginine translocation (Tat) system that transports large folded proteins containing a characteristic twin-arginine motif in their signal peptide across membranes. TatA could form the protein-conducting channel of the Tat system. The sequence is that of Sec-independent protein translocase protein TatA from Paraburkholderia phymatum (strain DSM 17167 / CIP 108236 / LMG 21445 / STM815) (Burkholderia phymatum).